A 935-amino-acid chain; its full sequence is Peptidyl-glycine alpha-amidating monooxygenase A (935 aa).

Residues 1 to 36 (MASLSSSFLVLFLLFQNSCYCFRSPLSVFKRYEEST) form the signal peptide. The tract at residues 1–390 (MASLSSSFLV…KREEEEVLDQ (390 aa)) is peptidylglycine alpha-hydroxylating monooxygenase. Topologically, residues 37–825 (RSLSNDCLGT…VQESSAGVSF (789 aa)) are intragranular. 5 disulfides stabilise this stretch: Cys43-Cys182, Cys77-Cys122, Cys110-Cys127, Cys223-Cys330, and Cys289-Cys311. Residues His103 and His104 each contribute to the Cu(2+) site. The Cu(2+) site is built by His168, His238, His240, and Met310. Residues 362-385 (HGHHHTEAEPEKNTGLQQPKREEE) form a disordered region. The peptidyl-alpha-hydroxyglycine alpha-amidating lyase stretch occupies residues 391–712 (DVHLEEDTDW…SPSKAEHRSV (322 aa)). A protein is bound at residue Arg426. NHL repeat units follow at residues 463-504 (SKVL…LGAG), 512-557 (LGRA…FSPN), and 565-609 (GEET…FHAE). 2 cysteine pairs are disulfide-bonded: Cys526/Cys547 and Cys594/Cys605. A protein is bound by residues Tyr546 and Arg598. Asn658 carries N-linked (GlcNAc...) asparagine glycosylation. The stretch at 662–705 (GDILDTFIPARKNFDMPHDIAAADDGTVYVGDAHANAVWKFSPS) is one NHL 4 repeat. The span at 728–751 (FETHIRSRPKTNESVEKQTQEKQQ) shows a compositional bias: basic and acidic residues. Disordered regions lie at residues 728-764 (FETH…TQEK) and 778-812 (QEKQ…TQEK). The N-linked (GlcNAc...) asparagine glycan is linked to Asn739. Residues 755–764 (NSAGVSTQEK) show a composition bias toward polar residues. A helical membrane pass occupies residues 826-846 (VLIITLLIIPIAVLIAIAIFI). The Cytoplasmic portion of the chain corresponds to 847-935 (RWRKVRMYGG…PIPPAPVSSS (89 aa)). The segment at 896–935 (KGFDRLSTEGSDQEKDDDDGSDSEEEYSAPPIPPAPVSSS) is disordered. A compositionally biased stretch (acidic residues) spans 909-922 (EKDDDDGSDSEEEY). Positions 925–935 (PPIPPAPVSSS) are enriched in pro residues.

The protein in the C-terminal section; belongs to the peptidyl-alpha-hydroxyglycine alpha-amidating lyase family. It in the N-terminal section; belongs to the copper type II ascorbate-dependent monooxygenase family. In terms of assembly, monomer. The cofactor is Zn(2+). Cu(2+) is required as a cofactor.

It is found in the cytoplasmic vesicle. The protein localises to the secretory vesicle membrane. The catalysed reaction is a [peptide]-C-terminal glycine + 2 L-ascorbate + O2 = a [peptide]-C-terminal (2S)-2-hydroxyglycine + 2 monodehydro-L-ascorbate radical + H2O. The enzyme catalyses a [peptide]-C-terminal (2S)-2-hydroxyglycine = a [peptide]-C-terminal amide + glyoxylate. In terms of biological role, bifunctional enzyme that catalyzes amidation of the C-terminus of proteins. Alpha-amidation is present at the C-terminus of many endocrine hormones and neuropeptides and is required for their activity. C-terminal amidation also takes place in response to protein fragmentation triggered by oxidative stress, promoting degradation of amidated protein fragments by the proteasome. Alpha-amidation involves two sequential reactions, both of which are catalyzed by separate catalytic domains of the enzyme. The first step, catalyzed by peptidyl alpha-hydroxylating monooxygenase (PHM) domain, is the copper-, ascorbate-, and O2- dependent stereospecific hydroxylation (with S stereochemistry) at the alpha-carbon (C-alpha) of the C-terminal glycine of the peptidylglycine substrate. The second step, catalyzed by the peptidylglycine amidoglycolate lyase (PAL) domain, is the zinc-dependent cleavage of the N-C-alpha bond, producing the alpha-amidated peptide and glyoxylate. This is Peptidyl-glycine alpha-amidating monooxygenase A (pam-a) from Xenopus laevis (African clawed frog).